A 1124-amino-acid chain; its full sequence is Phytochrome type A (1124 aa).

The span at 1–19 (MSTTRPSQSSNNSGRSRNS) shows a compositional bias: low complexity. Residues 1–21 (MSTTRPSQSSNNSGRSRNSAR) form a disordered region. The 184-residue stretch at 218–401 (SMERLCDTMV…VFAIHVNKEI (184 aa)) folds into the GAF domain. Cys-323 is a phytochromobilin binding site. PAS domains lie at 617 to 687 (VTSE…LQGE) and 750 to 821 (DYKA…VNFG). Residues 901–1120 (YMKRQIRNPL…ILSVELAAAH (220 aa)) form the Histidine kinase domain.

It belongs to the phytochrome family. As to quaternary structure, homodimer. Contains one covalently linked phytochromobilin chromophore.

Its function is as follows. Regulatory photoreceptor which exists in two forms that are reversibly interconvertible by light: the Pr form that absorbs maximally in the red region of the spectrum and the Pfr form that absorbs maximally in the far-red region. Photoconversion of Pr to Pfr induces an array of morphogenic responses, whereas reconversion of Pfr to Pr cancels the induction of those responses. Pfr controls the expression of a number of nuclear genes including those encoding the small subunit of ribulose-bisphosphate carboxylase, chlorophyll A/B binding protein, protochlorophyllide reductase, rRNA, etc. It also controls the expression of its own gene(s) in a negative feedback fashion. The chain is Phytochrome type A (PHYA) from Lathyrus sativus (White vetchling).